A 152-amino-acid polypeptide reads, in one-letter code: Nucleoside diphosphate kinase (152 aa).

ATP is bound by residues Lys-12, Phe-60, Arg-88, Thr-94, Arg-105, and Asn-115. The Pros-phosphohistidine intermediate role is filled by His-118.

Belongs to the NDK family. As to quaternary structure, homotrimer. Requires Mg(2+) as cofactor.

The enzyme catalyses a 2'-deoxyribonucleoside 5'-diphosphate + ATP = a 2'-deoxyribonucleoside 5'-triphosphate + ADP. It carries out the reaction a ribonucleoside 5'-diphosphate + ATP = a ribonucleoside 5'-triphosphate + ADP. Major role in the synthesis of nucleoside triphosphates other than ATP. The ATP gamma phosphate is transferred to the NDP beta phosphate via a ping-pong mechanism, using a phosphorylated active-site intermediate. The polypeptide is Nucleoside diphosphate kinase (ndk-1) (Neurospora crassa (strain ATCC 24698 / 74-OR23-1A / CBS 708.71 / DSM 1257 / FGSC 987)).